We begin with the raw amino-acid sequence, 475 residues long: C3a anaphylatoxin chemotactic receptor (475 aa).

Over 1-23 (MESSSAETNSTGLHLEPQYQPET) the chain is Extracellular. The N-linked (GlcNAc...) asparagine glycan is linked to Asn9. A helical membrane pass occupies residues 24 to 46 (ILAMAILGLTFVLGLPGNGLVLW). Over 47 to 57 (VAGLKMRRTVN) the chain is Cytoplasmic. The chain crosses the membrane as a helical span at residues 58-80 (TVWFLHLTVADFVCCLSLPFSMA). Topologically, residues 81-96 (HLALRGYWPYGEILCK) are extracellular. Residues Cys95 and Cys172 are joined by a disulfide bond. A helical membrane pass occupies residues 97–118 (FIPTVIIFNMFASVFLLTAISL). The Cytoplasmic portion of the chain corresponds to 119–139 (DRCLMVLKPIWCQNHRNVRTA). A helical membrane pass occupies residues 140–160 (CIICGCIWLVAFVLCIPVFVY). Residues 161 to 331 (RETFTLENHT…RLLKVITFTR (171 aa)) are Extracellular-facing. The N-linked (GlcNAc...) asparagine glycan is linked to Asn168. Residues Tyr174 and Tyr183 each carry the sulfotyrosine modification. 2 N-linked (GlcNAc...) asparagine glycosylation sites follow: Asn273 and Asn292. A helical transmembrane segment spans residues 332-351 (LVVGFLLPMIIMVACYTLII). Over 352–368 (FRMRRVRVVKSWNKALH) the chain is Cytoplasmic. A helical transmembrane segment spans residues 369–391 (LAMVVVTIFLICWAPYHVFGVLI). The Extracellular segment spans residues 392–408 (LFINPESRVGAALLSWD). A helical transmembrane segment spans residues 409–429 (HVSIALASANSCFNPFLYALL). The Cytoplasmic portion of the chain corresponds to 430–475 (GRDLRKRVRQSMKGILEAAFSEDISKSTSFIQAKAFSEKHSLSTNV). Position 450 is a phosphoserine (Ser450).

The protein belongs to the G-protein coupled receptor 1 family. In terms of assembly, interacts with VGF-derived peptide TLQP-21. As to expression, expressed in the heart, kidney, lung, liver, peritoneal macrophages and spleen.

The protein resides in the cell membrane. Its function is as follows. Receptor for the chemotactic and inflammatory peptide anaphylatoxin C3a. This receptor stimulates chemotaxis, granule enzyme release and superoxide anion production. This chain is C3a anaphylatoxin chemotactic receptor (C3AR1), found in Cavia porcellus (Guinea pig).